A 369-amino-acid chain; its full sequence is Biotin synthase (369 aa).

The region spanning 51–269 (NYVQVSTLLS…IAVARIMMPK (219 aa)) is the Radical SAM core domain. [4Fe-4S] cluster is bound by residues Cys-66, Cys-70, and Cys-73. Residues Cys-110, Cys-141, Cys-201, and Arg-273 each contribute to the [2Fe-2S] cluster site.

Belongs to the radical SAM superfamily. Biotin synthase family. Homodimer. The cofactor is [4Fe-4S] cluster. It depends on [2Fe-2S] cluster as a cofactor.

The enzyme catalyses (4R,5S)-dethiobiotin + (sulfur carrier)-SH + 2 reduced [2Fe-2S]-[ferredoxin] + 2 S-adenosyl-L-methionine = (sulfur carrier)-H + biotin + 2 5'-deoxyadenosine + 2 L-methionine + 2 oxidized [2Fe-2S]-[ferredoxin]. The protein operates within cofactor biosynthesis; biotin biosynthesis; biotin from 7,8-diaminononanoate: step 2/2. Its function is as follows. Catalyzes the conversion of dethiobiotin (DTB) to biotin by the insertion of a sulfur atom into dethiobiotin via a radical-based mechanism. The chain is Biotin synthase from Pseudoalteromonas atlantica (strain T6c / ATCC BAA-1087).